Here is a 290-residue protein sequence, read N- to C-terminus: Shikimate dehydrogenase (NADP(+)) (290 aa).

Residues 18 to 20 (SYS) and threonine 66 each bind shikimate. Lysine 70 functions as the Proton acceptor in the catalytic mechanism. Glutamate 82 contacts NADP(+). Shikimate is bound by residues asparagine 91 and aspartate 106. Residues 130-134 (GSGGA) and methionine 229 each bind NADP(+). Position 231 (tyrosine 231) interacts with shikimate. Glycine 252 contributes to the NADP(+) binding site.

Belongs to the shikimate dehydrogenase family. Homodimer.

It catalyses the reaction shikimate + NADP(+) = 3-dehydroshikimate + NADPH + H(+). The protein operates within metabolic intermediate biosynthesis; chorismate biosynthesis; chorismate from D-erythrose 4-phosphate and phosphoenolpyruvate: step 4/7. In terms of biological role, involved in the biosynthesis of the chorismate, which leads to the biosynthesis of aromatic amino acids. Catalyzes the reversible NADPH linked reduction of 3-dehydroshikimate (DHSA) to yield shikimate (SA). The chain is Shikimate dehydrogenase (NADP(+)) from Chlorobium phaeovibrioides (strain DSM 265 / 1930) (Prosthecochloris vibrioformis (strain DSM 265)).